We begin with the raw amino-acid sequence, 241 residues long: Endonuclease NucS (241 aa).

It belongs to the NucS endonuclease family.

It localises to the cytoplasm. Its function is as follows. Cleaves both 3' and 5' ssDNA extremities of branched DNA structures. The chain is Endonuclease NucS from Corynebacterium jeikeium (strain K411).